Here is a 431-residue protein sequence, read N- to C-terminus: 23S rRNA (uracil(1939)-C(5))-methyltransferase RlmD (431 aa).

The TRAM domain occupies 10–68 (RVTTRQIITVKVNDLDSFGQGVARHNGKALFIPGLLPEESAEVIITEDKKQFARARVSR). [4Fe-4S] cluster is bound by residues C81, C87, C90, and C161. S-adenosyl-L-methionine contacts are provided by Q264, F293, N298, E314, N341, and D362. C388 (nucleophile) is an active-site residue.

The protein belongs to the class I-like SAM-binding methyltransferase superfamily. RNA M5U methyltransferase family. RlmD subfamily.

It catalyses the reaction uridine(1939) in 23S rRNA + S-adenosyl-L-methionine = 5-methyluridine(1939) in 23S rRNA + S-adenosyl-L-homocysteine + H(+). Functionally, catalyzes the formation of 5-methyl-uridine at position 1939 (m5U1939) in 23S rRNA. The chain is 23S rRNA (uracil(1939)-C(5))-methyltransferase RlmD from Salmonella typhi.